Reading from the N-terminus, the 402-residue chain is uncharacterized protein (402 aa).

Helical transmembrane passes span 11–31 (LALA…IDMY), 48–68 (LVQL…LIVG), 80–100 (LLIC…SPNI), 108–125 (FLQG…RAIV), 140–160 (LLMV…GAIL), 167–187 (WHTI…LIAL), 219–239 (FMGY…YVSG), 254–274 (VFSI…FIIG), 286–306 (LRIA…MTMI), 308–328 (GPLA…GMVL), 347–367 (SALL…LVGI), and 373–393 (VPMG…FFGL).

This sequence belongs to the major facilitator superfamily. Bcr/CmlA family.

The protein resides in the cell membrane. This is an uncharacterized protein from Bacillus subtilis (strain 168).